The sequence spans 896 residues: Myelin regulatory factor-like protein (896 aa).

The NDT80 DNA-binding region spans 111–403 (GLPHRTFHNC…SNPGQFENDI (293 aa)). One can recognise a Peptidase S74 domain in the interval 449–557 (SDSRAKQNVQ…KLTNNLEERI (109 aa)). The stretch at 541–573 (GAVKQLCKLTNNLEERIEELEIWNRKLARLKRL) forms a coiled coil. Residues 622 to 638 (VFQSLVITLIAVMAFCL) traverse the membrane as a helical segment. Over residues 648–658 (APSSNLTSSQE) the composition is skewed to polar residues. Positions 648–672 (APSSNLTSSQEPALPSTASPSAPNT) are disordered. A compositionally biased stretch (low complexity) spans 659–672 (PALPSTASPSAPNT).

Belongs to the MRF family.

The protein resides in the membrane. The protein is Myelin regulatory factor-like protein (MYRFL) of Bos taurus (Bovine).